A 129-amino-acid chain; its full sequence is MKKAGILNRHLAGALAELGHGDGVLVCDAGMPVPDGPRVVDLAFRAGVPSFAEVVDGLLAELVVEGATAATEVREANAECAALLDGLFPALALVPHERLKELSAGARLIVRTGEARPYANVLLRCGVFF.

Histidine 20 serves as the catalytic Proton donor. Residues aspartate 28, histidine 96, and 118-120 contribute to the substrate site; that span reads YAN.

The protein belongs to the RbsD / FucU family. RbsD subfamily. In terms of assembly, homodecamer.

It localises to the cytoplasm. It carries out the reaction beta-D-ribopyranose = beta-D-ribofuranose. Its pathway is carbohydrate metabolism; D-ribose degradation; D-ribose 5-phosphate from beta-D-ribopyranose: step 1/2. In terms of biological role, catalyzes the interconversion of beta-pyran and beta-furan forms of D-ribose. This chain is D-ribose pyranase, found in Streptomyces coelicolor (strain ATCC BAA-471 / A3(2) / M145).